Reading from the N-terminus, the 540-residue chain is MKCAHFIDGPHCVKACPAGVLGENDTLVWKYADANAVCQLCHPNCTRGCKGPGLEGCPNGSKTPSIAAGVVGGLLCLVVVGLGIGLYLRRRHIVRKRTLRRLLQERELVEPLTPSGEAPNQAHLRILKETEFKKVKVLGFGAFGTVYKGLWIPEGEKVTIPVAIKELREATSPKANKEILDEAYVMASVDNPHVCRLLGICLTSTVQLITQLMPYGCLLDYIREHKDNIGSQYLLNWCVQIAKGMNYLEERHMVHRDLAARNVLVKTPQHVKITDFGLAKQLGADEKEYHAEGGKVPIKWMALESILHRIYTHQSDVWSYGVTVWELMTFGSKPYDGIPASEISSVLEKGERLPQPPICTIDVYMIMVKCWMSDADSRPKFRELIAEFSKMARDPPRYLVIQGDERMHLPSPTDSKFYRTLMEEEDMEDIVDADEYLVPHQGFFNSPSTSRTPLLSSLSATSNNSATNCIDRNGGHPVREDGFLPAPEYVNQLMPKKPSTAMVQNQIYNYISLTAISKLPIDSRYQNSHSTAVDNPEYLE.

Residues 132-399 form the Protein kinase domain; sequence FKKVKVLGFG…KMARDPPRYL (268 aa). Residues 138–146 and Lys-165 contribute to the ATP site; that span reads LGFGAFGTV. Catalysis depends on Asp-257, which acts as the Proton acceptor.

This sequence belongs to the protein kinase superfamily. Tyr protein kinase family. EGF receptor subfamily.

The catalysed reaction is L-tyrosyl-[protein] + ATP = O-phospho-L-tyrosyl-[protein] + ADP + H(+). In Avian erythroblastosis virus (strain ts167), this protein is Tyrosine-protein kinase transforming protein erbB (V-ERBB).